A 71-amino-acid polypeptide reads, in one-letter code: MVNVKKGVLVTSDPAFRQLLIHLDDSRQLGSKFIVRELDDTHLFIEKEIVPMLENKVEQIMENMNPEAVDK.

The protein belongs to the TFB5 family. As to quaternary structure, component of the 7-subunit TFIIH core complex.

It localises to the nucleus. The protein resides in the chromosome. Component of the general transcription and DNA repair factor IIH (TFIIH) core complex, which is involved in general and transcription-coupled nucleotide excision repair (NER) of damaged DNA and in RNA transcription by RNA polymerase II. In NER, TFIIH acts by opening DNA around the lesion to allow the excision of the damaged oligonucleotide and its replacement by a new DNA fragment. In transcription, TFIIH has an essential role in transcription initiation. When the pre-initiation complex (PIC) has been established, TFIIH is required for promoter opening and promoter escape. Necessary for the stability of the TFIIH complex and for the presence of normal levels of TFIIH in the cell. Required for efficient binding of TFIIH to damaged DNA. Dispensable for normal development, but required when transcription is challenged. This is General transcription and DNA repair factor IIH subunit TFB5 from Caenorhabditis elegans.